The primary structure comprises 346 residues: Glucose-6-phosphatase 3 (346 aa).

Over 1–24 (MESTLGAGIAMAEALQNQLPWLEN) the chain is Lumenal. A helical transmembrane segment spans residues 25-45 (VWLWVTFLGDPKSLFLFYFPA). At 46-54 (AYYASRRVG) the chain is on the cytoplasmic side. A helical transmembrane segment spans residues 55 to 75 (IAVLWISLITEWLNLVFKWFL). At 76–108 (FGDRPFWWVHESGYYSQAPAQVHQFPSSCETGP) the chain is on the lumenal side. Arginine 79 is a binding site for substrate. The chain crosses the membrane as a helical span at residues 109 to 129 (GSPSGHCMITGAALWPIMTAV). Histidine 114 serves as the catalytic Proton donor. Residues 130–140 (SSQMATRAHSR) are Cytoplasmic-facing. The helical transmembrane segment at 141 to 162 (WVRVIPSLAYCTFLLAVGLSRV) threads the bilayer. Arginine 161 is a substrate binding site. The Lumenal portion of the chain corresponds to 163–167 (FLLAH). Histidine 167 functions as the Nucleophile in the catalytic mechanism. The helical transmembrane segment at 168–186 (FPHQVLAGLITGAVLGWLM) threads the bilayer. Residues 187-197 (TPQVPMERELS) lie on the Cytoplasmic side of the membrane. The helical transmembrane segment at 198–218 (FYGLTSLALLLGASLIYWTLF) threads the bilayer. Over 219–254 (TLGLDLSWSINLASKWCERPEWVHLDSRPFASLSRD) the chain is Lumenal. A helical membrane pass occupies residues 255-273 (SGAALGLGIALHSPCYAQV). Residues 274 to 283 (RRAHLGYGQK) lie on the Cytoplasmic side of the membrane. The chain crosses the membrane as a helical span at residues 284–304 (LVCLVLAMGLLGPLNWLGYPP). Over 305 to 307 (QIS) the chain is Lumenal. A helical transmembrane segment spans residues 308 to 328 (LFYIFNFLKYTLWPCLVLALV). The Cytoplasmic segment spans residues 329-346 (PWLVHMFSAQEAPPIRSS).

Belongs to the glucose-6-phosphatase family.

The protein resides in the endoplasmic reticulum membrane. The enzyme catalyses D-glucose 6-phosphate + H2O = D-glucose + phosphate. It participates in carbohydrate biosynthesis; gluconeogenesis. With respect to regulation, inhibited by vanadate. In terms of biological role, hydrolyzes glucose-6-phosphate to glucose in the endoplasmic reticulum. May form with the glucose-6-phosphate transporter (SLC37A4/G6PT) a ubiquitously expressed complex responsible for glucose production through glycogenolysis and gluconeogenesis. Probably required for normal neutrophil function. The sequence is that of Glucose-6-phosphatase 3 (G6PC3) from Bos taurus (Bovine).